Consider the following 241-residue polypeptide: MRSGVIAQKVGMTRVFTDAGEHIPVTVLRLSNCQVLGHRTSEKNGYVALQLGSGARKTVYLPKAERGQFAVAKVEPKRKVAEFRVSEDSLIPVGAEIQADHFVVGQFVDVTGTSVGKGFAGGMKRWNFGGLRATHGVSVSHRSIGSTGGRQDPGKTFKNKKMPGHMGVDRVTTLNLRVVQTDVERGLILVEGAVPGSKGGWIAVRDAVKKPLPKDAPKPGKFKVAGDDKVTADAPTEKEGA.

2 disordered regions span residues 139-166 (VSHR…PGHM) and 209-241 (KKPL…KEGA). Gln151 carries the N5-methylglutamine modification.

The protein belongs to the universal ribosomal protein uL3 family. Part of the 50S ribosomal subunit. Forms a cluster with proteins L14 and L19. Post-translationally, methylated by PrmB.

Its function is as follows. One of the primary rRNA binding proteins, it binds directly near the 3'-end of the 23S rRNA, where it nucleates assembly of the 50S subunit. The polypeptide is Large ribosomal subunit protein uL3 (Nitrobacter hamburgensis (strain DSM 10229 / NCIMB 13809 / X14)).